A 352-amino-acid chain; its full sequence is UDP-3-O-acylglucosamine N-acyltransferase (352 aa).

The active-site Proton acceptor is H257.

Belongs to the transferase hexapeptide repeat family. LpxD subfamily. Homotrimer.

The catalysed reaction is a UDP-3-O-[(3R)-3-hydroxyacyl]-alpha-D-glucosamine + a (3R)-hydroxyacyl-[ACP] = a UDP-2-N,3-O-bis[(3R)-3-hydroxyacyl]-alpha-D-glucosamine + holo-[ACP] + H(+). It participates in bacterial outer membrane biogenesis; LPS lipid A biosynthesis. Catalyzes the N-acylation of UDP-3-O-acylglucosamine using 3-hydroxyacyl-ACP as the acyl donor. Is involved in the biosynthesis of lipid A, a phosphorylated glycolipid that anchors the lipopolysaccharide to the outer membrane of the cell. The sequence is that of UDP-3-O-acylglucosamine N-acyltransferase from Methylobacterium sp. (strain 4-46).